The sequence spans 142 residues: MLEKLAEAHPVWKEEEFGDKDAEDYIISYSMYNGSWLVWEKDGMPVAVSYHLEWSPSNGKPWLGTVLIDPAEEKKGHAKMIIEQISKLLRAKHKAMFAGVPIERREWILFLSQCGFEQLKTEKDEKGKSFMILVKPLAEAAV.

One can recognise an N-acetyltransferase domain in the interval 1-138 (MLEKLAEAHP…SFMILVKPLA (138 aa)).

This is an uncharacterized protein from Bacillus subtilis (strain 168).